Consider the following 352-residue polypeptide: tRNA pseudouridine synthase D (352 aa).

D81 acts as the Nucleophile in catalysis. The region spanning 157 to 303 (GVPNYFGLQR…MLHERRILRL (147 aa)) is the TRUD domain.

Belongs to the pseudouridine synthase TruD family.

It carries out the reaction uridine(13) in tRNA = pseudouridine(13) in tRNA. Functionally, responsible for synthesis of pseudouridine from uracil-13 in transfer RNAs. This is tRNA pseudouridine synthase D from Azotobacter vinelandii (strain DJ / ATCC BAA-1303).